The following is a 154-amino-acid chain: Aspartate carbamoyltransferase regulatory chain (154 aa).

Residues C109, C114, C138, and C141 each coordinate Zn(2+).

The protein belongs to the PyrI family. Contains catalytic and regulatory chains. Requires Zn(2+) as cofactor.

Functionally, involved in allosteric regulation of aspartate carbamoyltransferase. The sequence is that of Aspartate carbamoyltransferase regulatory chain from Aliivibrio fischeri (strain ATCC 700601 / ES114) (Vibrio fischeri).